Consider the following 275-residue polypeptide: uncharacterized protein (275 aa).

This is an uncharacterized protein from Methanocaldococcus jannaschii (strain ATCC 43067 / DSM 2661 / JAL-1 / JCM 10045 / NBRC 100440) (Methanococcus jannaschii).